We begin with the raw amino-acid sequence, 229 residues long: NAD-dependent protein deacetylase (229 aa).

The Deacetylase sirtuin-type domain maps to 1–229; the sequence is MNKLNEALKK…SDAVKVFEEI (229 aa). NAD(+) contacts are provided by Ala-20, Arg-32, Gln-96, Ile-98, Asp-99, His-114, Thr-181, Ser-182, Asn-205, and Val-223. Positions 98 and 99 each coordinate nicotinamide. His-114 functions as the Proton acceptor in the catalytic mechanism.

Belongs to the sirtuin family. Class U subfamily.

It is found in the cytoplasm. It catalyses the reaction N(6)-acetyl-L-lysyl-[protein] + NAD(+) + H2O = 2''-O-acetyl-ADP-D-ribose + nicotinamide + L-lysyl-[protein]. In terms of biological role, NAD-dependent protein deacetylase which modulates the activities of several enzymes which are inactive in their acetylated form. The sequence is that of NAD-dependent protein deacetylase from Listeria monocytogenes serovar 1/2a (strain ATCC BAA-679 / EGD-e).